The primary structure comprises 247 residues: 1-(5-phosphoribosyl)-5-[(5-phosphoribosylamino)methylideneamino] imidazole-4-carboxamide isomerase (247 aa).

Asp8 serves as the catalytic Proton acceptor. Residue Asp129 is the Proton donor of the active site.

It belongs to the HisA/HisF family.

It localises to the cytoplasm. It catalyses the reaction 1-(5-phospho-beta-D-ribosyl)-5-[(5-phospho-beta-D-ribosylamino)methylideneamino]imidazole-4-carboxamide = 5-[(5-phospho-1-deoxy-D-ribulos-1-ylimino)methylamino]-1-(5-phospho-beta-D-ribosyl)imidazole-4-carboxamide. Its pathway is amino-acid biosynthesis; L-histidine biosynthesis; L-histidine from 5-phospho-alpha-D-ribose 1-diphosphate: step 4/9. This is 1-(5-phosphoribosyl)-5-[(5-phosphoribosylamino)methylideneamino] imidazole-4-carboxamide isomerase from Rhodospirillum centenum (strain ATCC 51521 / SW).